Here is an 87-residue protein sequence, read N- to C-terminus: Monogrin 1 (87 aa).

Residues 8 to 62 (CGYLMMRGCRGDTTATRAWGFNYEEKKCQQETVICGTGGAPRNAFETKQDCDALC) enclose the BPTI/Kunitz inhibitor domain. 3 disulfide bridges follow: Cys8-Cys62, Cys16-Cys42, and Cys35-Cys58. A Cell attachment site motif is present at residues 17-19 (RGD).

The N-terminus is blocked. Expressed in salivary glands.

It localises to the cytoplasmic vesicle. It is found in the secretory vesicle. The protein localises to the secreted. In terms of biological role, tick salivary platelet aggregation inhibitor that plays an important part in the anti-hemostatic strategy of ticks. Inhibits platelet aggregation induced by ADP (IC(50)~150 nM), collagen, and platelet activating factor (PAF). Acts by binding to platelet membrane glycoprotein IIb-IIIa (ITGA2B/ITGB3) in a metal ion dependent manner. Does not inhibit aggregation induced by ristocecin, an agonist that aggregates platelets independently from the glycoprotein IIb-IIIa (ITGA2B/ITGB3). In contrast to other tick platelet aggregation inhibitors, this protein does not protect ITGA2B/ITGB3 from dissociation under SDS condition, suggesting it may dissocate much faster than its orthologs. This chain is Monogrin 1, found in Argas monolakensis (Mono lake bird tick).